The chain runs to 931 residues: Neuropilin-2 (931 aa).

The or 22 signal peptide spans Met1–Val20. Residues Arg21 to Pro864 are Extracellular-facing. Cystine bridges form between Cys28–Cys55, Cys83–Cys105, and Cys149–Cys175. CUB domains are found at residues Cys28–Phe142 and Cys149–Val267. 2 N-linked (GlcNAc...) asparagine glycosylation sites follow: Asn152 and Asn157. Positions 197, 211, and 252 each coordinate Ca(2+). The cysteines at positions 208 and 230 are disulfide-linked. Disulfide bonds link Cys277–Cys427 and Cys434–Cys592. F5/8 type C domains are found at residues Cys277 to Cys427 and Cys434 to Cys592. A compositionally biased stretch (polar residues) spans Thr298–Arg310. Residues Thr298–Gly317 are disordered. Residues Val601 to Glu622 are disordered. Asn629 carries N-linked (GlcNAc...) asparagine glycosylation. The region spanning Ser642–Glu802 is the MAM domain. The N-linked (GlcNAc...) asparagine glycan is linked to Asn839. Residues Ile865–Tyr889 traverse the membrane as a helical segment. Topologically, residues Cys890–Ala931 are cytoplasmic.

This sequence belongs to the neuropilin family. Heterodimer with NRP1. Binds PLXNB1. In terms of assembly, (Microbial infection) Interacts with human cytomegalovirus proteins gL, UL128, UL130 and UL131A.

The protein resides in the membrane. The protein localises to the secreted. High affinity receptor for semaphorins 3C, 3F, VEGF-165 and VEGF-145 isoforms of VEGF, and the PLGF-2 isoform of PGF. Its function is as follows. (Microbial infection) Acts as a receptor for human cytomegalovirus pentamer-dependent entry in epithelial and endothelial cells. The chain is Neuropilin-2 (NRP2) from Homo sapiens (Human).